We begin with the raw amino-acid sequence, 365 residues long: DNA replication and repair protein RecF (365 aa).

Gly30–Thr37 lines the ATP pocket.

This sequence belongs to the RecF family.

Its subcellular location is the cytoplasm. In terms of biological role, the RecF protein is involved in DNA metabolism; it is required for DNA replication and normal SOS inducibility. RecF binds preferentially to single-stranded, linear DNA. It also seems to bind ATP. This Desulfitobacterium hafniense (strain DSM 10664 / DCB-2) protein is DNA replication and repair protein RecF.